A 98-amino-acid chain; its full sequence is Co-chaperonin GroES (98 aa).

Belongs to the GroES chaperonin family. In terms of assembly, heptamer of 7 subunits arranged in a ring. Interacts with the chaperonin GroEL.

It localises to the cytoplasm. Together with the chaperonin GroEL, plays an essential role in assisting protein folding. The GroEL-GroES system forms a nano-cage that allows encapsulation of the non-native substrate proteins and provides a physical environment optimized to promote and accelerate protein folding. GroES binds to the apical surface of the GroEL ring, thereby capping the opening of the GroEL channel. The protein is Co-chaperonin GroES of Leifsonia xyli subsp. xyli (strain CTCB07).